We begin with the raw amino-acid sequence, 472 residues long: Glutamine synthetase (472 aa).

The GS beta-grasp domain maps to 13 to 101 (SKARFVDLRF…TCDVIDPADG (89 aa)). Residues 108 to 472 (PRSIARRAEA…PLEFEMYYSL (365 aa)) enclose the GS catalytic domain. Mg(2+) is bound by residues glutamate 133 and glutamate 135. Position 211 (glutamate 211) interacts with ATP. Positions 216 and 224 each coordinate Mg(2+). L-glutamate is bound by residues 268-269 (NG) and glycine 269. Histidine 273 lines the Mg(2+) pocket. ATP is bound by residues 275–277 (HQS) and serine 277. Arginine 325, glutamate 331, and arginine 343 together coordinate L-glutamate. Residues arginine 343, arginine 348, and lysine 356 each contribute to the ATP site. Residue glutamate 361 coordinates Mg(2+). Arginine 363 lines the L-glutamate pocket. Residue tyrosine 401 is modified to O-AMP-tyrosine.

It belongs to the glutamine synthetase family. Oligomer of 12 subunits arranged in the form of two hexameric ring. Mg(2+) serves as cofactor.

The protein resides in the cytoplasm. It carries out the reaction L-glutamate + NH4(+) + ATP = L-glutamine + ADP + phosphate + H(+). Its activity is regulated as follows. The activity of this enzyme could be controlled by adenylation under conditions of abundant glutamine. In terms of biological role, catalyzes the ATP-dependent biosynthesis of glutamine from glutamate and ammonia. This Neisseria gonorrhoeae protein is Glutamine synthetase.